A 652-amino-acid polypeptide reads, in one-letter code: MKKRIKELTDLLNRYRYDYYTKDAPSVSDSDYDKLYRELVTLEQSYPEYVLQDSPTQQVGGTILKGFEKYRHQYPLFSLQDAFSREELDAFDKRVKAEFPNATYLAELKIDGLSISLSYENGFLQVGATRGDGNIGENITENIKKIKDIPHQLSEPLTITVRGEAYMSRQSFKAINEARQENGETEFANPRNAAAGTLRQLDTSVVAKRQLATFLYQEASPTARNQQNEVLAELADLGFSVNPYYQLTSSMDEIWDFIKTIEAKRDQLAYDIDGVVIKVNSLAMQEELGFTVKAPRWAIAYKFPAEEKEAEILSVDWTVGRTGVVTPTANLTPVQLAGTTVSRATLHNVDYIAEKDIRIGDTVIVYKAGDIIPAVLNVVMSKRNQQEVMLIPKLCPSCGSELVHFEDEVALRCINPLCPSLIQRSLEHFASRDAMNITGLGPAIVEKLFLAGFVHDVADIYQLTKEDFMQLDGIKEKSADKLLAAIEASKSNSAEKLLFGLGIRHIGSKVSRLILEVYGDISALLTAKEEEIARIDGLGSTIAQSLTQYFEQKTAAILVDELKTAGVNMHYSGQKVNSDAALFGLTVVLTGKLNQLNRNEAKDKLEALGAKVTGSVSKKTDLVIAGSDAGSKLEKAKSLGIRIEDEDWLRKL.

Residues 29–33 (DSDYD), 78–79 (SL), and E107 each bind NAD(+). K109 (N6-AMP-lysine intermediate) is an active-site residue. NAD(+) is bound by residues R130, E164, K278, and K302. Positions 395, 398, 413, and 418 each coordinate Zn(2+). The 76-residue stretch at 577–652 (NSDAALFGLT…IEDEDWLRKL (76 aa)) folds into the BRCT domain.

This sequence belongs to the NAD-dependent DNA ligase family. LigA subfamily. The cofactor is Mg(2+). It depends on Mn(2+) as a cofactor.

It carries out the reaction NAD(+) + (deoxyribonucleotide)n-3'-hydroxyl + 5'-phospho-(deoxyribonucleotide)m = (deoxyribonucleotide)n+m + AMP + beta-nicotinamide D-nucleotide.. DNA ligase that catalyzes the formation of phosphodiester linkages between 5'-phosphoryl and 3'-hydroxyl groups in double-stranded DNA using NAD as a coenzyme and as the energy source for the reaction. It is essential for DNA replication and repair of damaged DNA. This chain is DNA ligase, found in Streptococcus pyogenes serotype M18 (strain MGAS8232).